The following is a 195-amino-acid chain: Probable DNA-directed RNA polymerase subunit delta (195 aa).

The HTH HARE-type domain occupies 14 to 83; the sequence is LSMIEVARAI…GDNKWGLRSW (70 aa). Acidic residues-rich tracts occupy residues 120–138 and 145–195; these read DSDA…DAYE and YDDE…TSEE. The interval 120-195 is disordered; that stretch reads DSDAIDYNAD…SDDDAETSEE (76 aa).

The protein belongs to the RpoE family. As to quaternary structure, RNAP is composed of a core of 2 alpha, a beta and a beta' subunits. The core is associated with a delta subunit and one of several sigma factors.

Participates in both the initiation and recycling phases of transcription. In the presence of the delta subunit, RNAP displays an increased specificity of transcription, a decreased affinity for nucleic acids, and an increased efficiency of RNA synthesis because of enhanced recycling. In Streptococcus pneumoniae serotype 2 (strain D39 / NCTC 7466), this protein is Probable DNA-directed RNA polymerase subunit delta.